The primary structure comprises 156 residues: Small ribosomal subunit protein uS7 (156 aa).

The protein belongs to the universal ribosomal protein uS7 family. Part of the 30S ribosomal subunit. Contacts proteins S9 and S11.

Its function is as follows. One of the primary rRNA binding proteins, it binds directly to 16S rRNA where it nucleates assembly of the head domain of the 30S subunit. Is located at the subunit interface close to the decoding center, probably blocks exit of the E-site tRNA. This Rhizobium leguminosarum bv. trifolii (strain WSM2304) protein is Small ribosomal subunit protein uS7.